We begin with the raw amino-acid sequence, 261 residues long: Cytochrome c oxidase subunit 3 (261 aa).

Residues 1–15 (MTHQLHAYHMVKPSP) are Mitochondrial matrix-facing. Residues 16-34 (WPLTGALSAFLLTSGLIMW) traverse the membrane as a helical segment. Residues 35 to 40 (FHFYST) are Mitochondrial intermembrane-facing. A helical membrane pass occupies residues 41–66 (ALLTLGLLTNVLTMYQWWRDIIREST). Residues 67-72 (YQGHHT) are Mitochondrial matrix-facing. A helical transmembrane segment spans residues 73-105 (TPVQKSLRYGMTLFIISEVFFFAGFFWAFYHSS). Topologically, residues 106–128 (LAPTPRLGCHWPPTGITPLNPLE) are mitochondrial intermembrane. A helical transmembrane segment spans residues 129 to 152 (VPLLNTSVLLASGVTITWAHHSLM). Residues 153–155 (NGN) are Mitochondrial matrix-facing. Residues 156-183 (RKQTIQALLITILLGTYFTLVQISEYFE) form a helical membrane-spanning segment. Topologically, residues 184-190 (APFTISD) are mitochondrial intermembrane. The helical transmembrane segment at 191–223 (GIYGSTFFVATGFHGLHVIIGSTFLLICLIRQL) threads the bilayer. The Mitochondrial matrix portion of the chain corresponds to 224-232 (FYHFTPSHH). A helical membrane pass occupies residues 233–256 (FGFEAAAWYWHFVDVIWLFLYISI). Over 257-261 (YWWGS) the chain is Mitochondrial intermembrane.

It belongs to the cytochrome c oxidase subunit 3 family. Component of the cytochrome c oxidase (complex IV, CIV), a multisubunit enzyme composed of 14 subunits. The complex is composed of a catalytic core of 3 subunits MT-CO1, MT-CO2 and MT-CO3, encoded in the mitochondrial DNA, and 11 supernumerary subunits COX4I, COX5A, COX5B, COX6A, COX6B, COX6C, COX7A, COX7B, COX7C, COX8 and NDUFA4, which are encoded in the nuclear genome. The complex exists as a monomer or a dimer and forms supercomplexes (SCs) in the inner mitochondrial membrane with NADH-ubiquinone oxidoreductase (complex I, CI) and ubiquinol-cytochrome c oxidoreductase (cytochrome b-c1 complex, complex III, CIII), resulting in different assemblies (supercomplex SCI(1)III(2)IV(1) and megacomplex MCI(2)III(2)IV(2)).

It is found in the mitochondrion inner membrane. The enzyme catalyses 4 Fe(II)-[cytochrome c] + O2 + 8 H(+)(in) = 4 Fe(III)-[cytochrome c] + 2 H2O + 4 H(+)(out). Functionally, component of the cytochrome c oxidase, the last enzyme in the mitochondrial electron transport chain which drives oxidative phosphorylation. The respiratory chain contains 3 multisubunit complexes succinate dehydrogenase (complex II, CII), ubiquinol-cytochrome c oxidoreductase (cytochrome b-c1 complex, complex III, CIII) and cytochrome c oxidase (complex IV, CIV), that cooperate to transfer electrons derived from NADH and succinate to molecular oxygen, creating an electrochemical gradient over the inner membrane that drives transmembrane transport and the ATP synthase. Cytochrome c oxidase is the component of the respiratory chain that catalyzes the reduction of oxygen to water. Electrons originating from reduced cytochrome c in the intermembrane space (IMS) are transferred via the dinuclear copper A center (CU(A)) of subunit 2 and heme A of subunit 1 to the active site in subunit 1, a binuclear center (BNC) formed by heme A3 and copper B (CU(B)). The BNC reduces molecular oxygen to 2 water molecules using 4 electrons from cytochrome c in the IMS and 4 protons from the mitochondrial matrix. The polypeptide is Cytochrome c oxidase subunit 3 (MT-CO3) (Papio hamadryas (Hamadryas baboon)).